An 87-amino-acid polypeptide reads, in one-letter code: AEMRNFALRDAQGNEIGVFTGKSPRQAALKAANRGYTEIKLRERGTKKVHIFSGERVQVDKPAGAPAWMPDKIWKPKVKKEGIEKLD.

Its function is as follows. Protects DNA against thermal denaturation and modulates transcription. The protein is Chromosomal protein MC1b of Methanothrix soehngenii (Methanosaeta concilii).